Reading from the N-terminus, the 129-residue chain is Calcitonin gene-related peptide 2 (129 aa).

The first 25 residues, 1 to 25, serve as a signal peptide directing secretion; that stretch reads MGFGKPSSFLAFSILVLCQAGSLQA. Residues 26 to 81 constitute a propeptide that is removed on maturation; the sequence is QPLRSSLESLPDPAALSEKEGRLLLAALVKAYVQRKTNELEQEQEQEMEGSSLTAQ. Cysteines 85 and 90 form a disulfide. Phenylalanine 120 is modified (phenylalanine amide). Positions 126-129 are excised as a propeptide; it reads DLQA.

The protein belongs to the calcitonin family.

It localises to the secreted. Its function is as follows. CALCB/CGRP2 is a peptide hormone that induces vasodilation mediated by the CALCRL-RAMP1 receptor complex. Dilates a variety of vessels including the coronary, cerebral and systemic vasculature. Its abundance in the CNS also points toward a neurotransmitter or neuromodulator role. The protein is Calcitonin gene-related peptide 2 (CALCB) of Equus caballus (Horse).